The primary structure comprises 832 residues: Cytosolic carboxypeptidase-like protein 5 (832 aa).

Residues 27 to 50 (TVPSDGEGVGGAATAPTSGSASSP) are disordered. Residues 38 to 50 (AATAPTSGSASSP) are compositionally biased toward low complexity. The Peptidase M14 domain maps to 157–571 (YPFSYSDCQD…ALAIAALDMA (415 aa)). 2 residues coordinate Zn(2+): histidine 252 and glutamate 255. Residues 343–354 (NSKNPSNQQPSS) are compositionally biased toward low complexity. Disordered stretches follow at residues 343-362 (NSKN…PEVP) and 376-402 (LHLG…KTDP). A compositionally biased stretch (basic and acidic residues) spans 384-401 (GENHDRWTETEPTEEKTD). Position 435 (histidine 435) interacts with Zn(2+). The Proton donor/acceptor role is filled by glutamate 517. Positions 606–752 (STANVGLNKK…ASPTSSRNMG (147 aa)) are disordered. A compositionally biased stretch (polar residues) spans 621 to 636 (PPKSNNGLPVSCSENA). The segment covering 644–654 (STGTSTGGSSS) has biased composition (low complexity). Polar residues predominate over residues 655–666 (QQNSPQMKNSPS). A compositionally biased stretch (low complexity) spans 708-752 (QQQQQQQQQQQQQQQQPLNQRSTTSSLAPSPTLASASPTSSRNMG).

Belongs to the peptidase M14 family. Zn(2+) is required as a cofactor.

The protein localises to the cytoplasm. Its subcellular location is the cytosol. It localises to the nucleus. The protein resides in the cytoskeleton. It is found in the spindle. The protein localises to the midbody. The catalysed reaction is gamma-L-glutamyl-L-glutamyl-[protein] + H2O = L-glutamyl-[protein] + L-glutamate. It catalyses the reaction (L-glutamyl)(n+1)-gamma-L-glutamyl-L-glutamyl-[protein] + H2O = (L-glutamyl)(n)-gamma-L-glutamyl-L-glutamyl-[protein] + L-glutamate. It carries out the reaction C-terminal L-alpha-aminoacyl-L-glutamyl-[tubulin] + H2O = C-terminal L-alpha-aminoacyl-[tubulin] + L-glutamate. The enzyme catalyses C-terminal L-alpha-aminoacyl-L-glutamyl-L-glutamyl-[tubulin] + H2O = C-terminal L-alpha-aminoacyl-L-glutamyl-[tubulin] + L-glutamate. Functionally, metallocarboxypeptidase that mediates deglutamylation of tubulin and non-tubulin target proteins. Catalyzes the removal of polyglutamate side chains present on the gamma-carboxyl group of glutamate residues within the C-terminal tail of alpha- and beta-tubulin. Cleaves alpha- and gamma-linked polyglutamate tubulin side-chain, as well as the branching point glutamate. Also catalyzes the removal of alpha-linked glutamate residues from the carboxy-terminus of alpha-tubulin. Mediates deglutamylation of nucleotidyltransferase CGAS, leading to CGAS antiviral defense response activation. The protein is Cytosolic carboxypeptidase-like protein 5 (Agbl5) of Rattus norvegicus (Rat).